Consider the following 90-residue polypeptide: Probable Fe(2+)-trafficking protein (90 aa).

Belongs to the Fe(2+)-trafficking protein family. As to quaternary structure, monomer.

Its function is as follows. Could be a mediator in iron transactions between iron acquisition and iron-requiring processes, such as synthesis and/or repair of Fe-S clusters in biosynthetic enzymes. The chain is Probable Fe(2+)-trafficking protein from Yersinia enterocolitica serotype O:8 / biotype 1B (strain NCTC 13174 / 8081).